The primary structure comprises 400 residues: Snake venom metalloproteinase H3 (400 aa).

An N-terminal signal peptide occupies residues 1-6; sequence FPYQGS. Residues 7-176 constitute a propeptide that is removed on maturation; that stretch reads SIILESGNVN…KKASQLIVST (170 aa). Positions 180 to 377 constitute a Peptidase M12B domain; it reads KYMEIVIVVD…ENPPCILNKP (198 aa). Ca(2+) is bound by residues Glu183 and Asp267. Intrachain disulfides connect Cys291/Cys372, Cys331/Cys356, and Cys333/Cys339. Residue His316 participates in Zn(2+) binding. The active site involves Glu317. Positions 320 and 326 each coordinate Zn(2+). Residues Cys372, Asn375, Val387, Asn390, Leu392, Glu394, and Asp400 each coordinate Ca(2+). Positions 378-400 are excised as a propeptide; sequence LRTDTVSTPVSGNELLEAGKDYD.

The protein belongs to the venom metalloproteinase (M12B) family. P-I subfamily. In terms of assembly, monomer. The cofactor is Zn(2+). As to expression, expressed by the venom gland.

It localises to the secreted. Its function is as follows. Snake venom metalloproteinase that impairs hemostasis in the envenomed animal. In Deinagkistrodon acutus (Hundred-pace snake), this protein is Snake venom metalloproteinase H3.